A 340-amino-acid chain; its full sequence is MPQAHFFALLLAAVVPAVLADGPPESMGEKFSGLNVLDGNGGLQSLTPTPYTISQWPWGTVPKLCYDTSVNNKYCNPYDLEVYDVRYTDCPIPTTVCRCKNSPMAIDTIAQRVGQLPVKARQYNGYVSSFAGDMCSAYSDSFNNYFFGDCGNSESVFFHELSHNLDRHVAGASINDWYSLSQDWKDTVAKDTCVADHYSKASWLEAYAQVGVMAGYDATVQSIYTQNVGCMVNQVKKVVGQLNSVWRKQPGQMCDRYWIKDTTVCMGPDAEASGHCQASKADVAAESGGVNPVLPDGQQKKHDALVKELQRHAEAAAGISSGKPAADRKTKGKKGTKFRV.

The segment at 313–340 (AEAAAGISSGKPAADRKTKGKKGTKFRV) is disordered. Residues 330-340 (TKGKKGTKFRV) show a composition bias toward basic residues.

The chain is Conidiation-specific protein 13 (con-13) from Neurospora crassa (strain ATCC 24698 / 74-OR23-1A / CBS 708.71 / DSM 1257 / FGSC 987).